The primary structure comprises 155 residues: Transcriptional regulator MraZ (155 aa).

2 consecutive SpoVT-AbrB domains span residues 15–62 (TYEN…GMDR) and 93–136 (SEEL…NPTA).

It belongs to the MraZ family. Forms oligomers.

Its subcellular location is the cytoplasm. The protein resides in the nucleoid. This is Transcriptional regulator MraZ from Rhodospirillum rubrum (strain ATCC 11170 / ATH 1.1.1 / DSM 467 / LMG 4362 / NCIMB 8255 / S1).